The primary structure comprises 139 residues: Large-conductance mechanosensitive channel (139 aa).

A run of 2 helical transmembrane segments spans residues 14-34 (VIDL…INSL) and 81-101 (GSFL…FMIV).

Belongs to the MscL family. In terms of assembly, homopentamer.

It localises to the cell membrane. Functionally, channel that opens in response to stretch forces in the membrane lipid bilayer. May participate in the regulation of osmotic pressure changes within the cell. The sequence is that of Large-conductance mechanosensitive channel from Chloroflexus aurantiacus (strain ATCC 29366 / DSM 635 / J-10-fl).